Consider the following 508-residue polypeptide: Kinesin light chain (508 aa).

The stretch at 34-129 (IAEVQKDNEK…KKHLEFMASV (96 aa)) forms a coiled coil. Residues 156-175 (DEENEDRHNMSPTPPSQFAN) are disordered. T168 carries the phosphothreonine modification. 6 TPR repeats span residues 186-219 (LRTL…LERT), 228-261 (ATML…RGKT), 270-303 (AATL…REKV), 312-345 (AKQL…YESK), 354-387 (AKTK…AHER), and 437-470 (TTTL…KKEA). T477 carries the phosphothreonine modification. A phosphoserine mark is found at S480 and S485. Positions 484-508 (TSNEKRRSKAIKEDLDFSEEKNAKP) are disordered. Residues 493–508 (AIKEDLDFSEEKNAKP) are compositionally biased toward basic and acidic residues.

This sequence belongs to the kinesin light chain family. As to quaternary structure, oligomeric complex composed of two heavy chains and two light chains. As to expression, ubiquitous.

The protein resides in the cytoplasm. Its subcellular location is the cytoskeleton. In terms of biological role, kinesin is a microtubule-associated force-producing protein that may play a role in organelle transport. The light chain may function in coupling of cargo to the heavy chain or in the modulation of its ATPase activity. In Drosophila melanogaster (Fruit fly), this protein is Kinesin light chain (Klc).